The primary structure comprises 518 residues: Sensor protein kinase HptS (518 aa).

A run of 2 helical transmembrane segments spans residues 20–40 and 222–242; these read IFPV…IYIW and GITL…FGFI. The Histidine kinase domain maps to 297 to 513; that stretch reads EQLIHSIEHT…LICYKIPLSR (217 aa). His-325 bears the Phosphohistidine; by autocatalysis mark.

Post-translationally, autophosphorylated.

The protein localises to the cell membrane. It catalyses the reaction ATP + protein L-histidine = ADP + protein N-phospho-L-histidine.. In terms of biological role, member of the two-component regulatory system HptS/HptR that regulates genes involved in hexose phosphate transport system in response to changes in extracellular phosphate sources. May act as a sensor protein kinase which is autophosphorylated at a histidine residue and transfers its phosphate group to the conserved aspartic acid residue in the regulatory domain of HptS. In turn, HptS antagonizes CcpA-dependent transcription of a subset of CcpA-regulated genes involved in antibiotic susceptibility. In Staphylococcus aureus (strain USA300), this protein is Sensor protein kinase HptS (hptS).